A 188-amino-acid chain; its full sequence is Phosphatidylcholine-sterol acyltransferase (188 aa).

Asparagine 20 carries an N-linked (GlcNAc...) asparagine glycan. Histidine 169 acts as the Charge relay system in catalysis.

Belongs to the AB hydrolase superfamily. Lipase family. As to expression, detected in blood plasma (at protein level).

It localises to the secreted. It carries out the reaction a sterol + a 1,2-diacyl-sn-glycero-3-phosphocholine = a sterol ester + a 1-acyl-sn-glycero-3-phosphocholine. The catalysed reaction is a 1-O-alkyl-2-acetyl-sn-glycero-3-phosphocholine + H2O = a 1-O-alkyl-sn-glycero-3-phosphocholine + acetate + H(+). It catalyses the reaction a 1-hexadecanoyl-2-acyl-sn-glycero-3-phosphocholine + (24S)-hydroxycholesterol = (24S)-24-hydroxycholesterol ester + 1-hexadecanoyl-sn-glycero-3-phosphocholine. The enzyme catalyses (24S)-hydroxycholesterol + 1-hexadecanoyl-2-(9Z,12Z-octadecadienoyl)-sn-glycero-3-phosphocholine = (24S)-hydroxycholesterol 3-linoleoate + 1-hexadecanoyl-sn-glycero-3-phosphocholine. It carries out the reaction 1-hexadecanoyl-2-(5Z,8Z,11Z,14Z-eicosatetraenoyl)-sn-glycero-3-phosphocholine + cholesterol = cholesteryl (5Z,8Z,11Z,14Z)-eicosatetraenoate + 1-hexadecanoyl-sn-glycero-3-phosphocholine. The catalysed reaction is 1-hexadecanoyl-2-(9Z-octadecenoyl)-sn-glycero-3-phosphocholine + cholesterol = cholesteryl (9Z-octadecenoate) + 1-hexadecanoyl-sn-glycero-3-phosphocholine. It catalyses the reaction 1-hexadecanoyl-2-(8Z,11Z,14Z-eicosatrienoyl)-sn-glycero-3-phosphocholine + cholesterol = cholesteryl (8Z,11Z,14Z)-eicosatrienoate + 1-hexadecanoyl-sn-glycero-3-phosphocholine. The enzyme catalyses 1-hexadecanoyl-2-(5Z,8Z,11Z-eicosatrienoyl)-sn-glycero-3-phosphocholine + cholesterol = cholesteryl (5Z,8Z,11Z)-eicosatrienoate + 1-hexadecanoyl-sn-glycero-3-phosphocholine. It carries out the reaction 1-hexadecanoyl-2-(5Z,8Z,11Z,14Z,17Z-eicosapentaenoyl)-sn-glycero-3-phosphocholine + cholesterol = (5Z,8Z,11Z,14Z,17Z-eicosapentaenoyl)-cholesterol + 1-hexadecanoyl-sn-glycero-3-phosphocholine. The catalysed reaction is 1-hexadecanoyl-2-(9Z,12Z-octadecadienoyl)-sn-glycero-3-phosphocholine + cholesterol = cholesteryl (9Z,12Z)-octadecadienoate + 1-hexadecanoyl-sn-glycero-3-phosphocholine. It catalyses the reaction 1-hexadecanoyl-2-(6Z,9Z,12Z-octadecatrienoyl)-sn-glycero-3-phosphocholine + cholesterol = (6Z,9Z,12Z-octadecatrienoyl)-cholesterol + 1-hexadecanoyl-sn-glycero-3-phosphocholine. The enzyme catalyses 1-hexadecanoyl-2-(11Z,14Z,17Z-eicosatrienoyl)-sn-glycero-3-phosphocholine + cholesterol = (11Z,14Z,17Z-eicosatrienoyl)-cholesterol + 1-hexadecanoyl-sn-glycero-3-phosphocholine. It carries out the reaction 1-hexadecanoyl-2-(9Z,12Z,15Z-octadecatrienoyl)-sn-glycero-3-phosphocholine + cholesterol = (9Z,12Z,15Z-octadecatrienoyl)-cholesterol + 1-hexadecanoyl-sn-glycero-3-phosphocholine. The catalysed reaction is 1-hexadecanoyl-2-(9Z,12Z-octadecadienoyl)-sn-glycero-3-phosphocholine + H2O = (9Z,12Z)-octadecadienoate + 1-hexadecanoyl-sn-glycero-3-phosphocholine + H(+). It catalyses the reaction 1-hexadecanoyl-2-(5Z,8Z,11Z,14Z-eicosatetraenoyl)-sn-glycero-3-phosphocholine + H2O = 1-hexadecanoyl-sn-glycero-3-phosphocholine + (5Z,8Z,11Z,14Z)-eicosatetraenoate + H(+). The enzyme catalyses a 1-O-alkyl-2-acetyl-sn-glycero-3-phosphocholine + 1-hexadecanoyl-sn-glycero-3-phosphocholine = 1-hexadecanoyl-2-acetyl-sn-glycero-3-phosphocholine + a 1-O-alkyl-sn-glycero-3-phosphocholine. Central enzyme in the extracellular metabolism of plasma lipoproteins. Synthesized mainly in the liver and secreted into plasma where it converts cholesterol and phosphatidylcholines (lecithins) to cholesteryl esters and lysophosphatidylcholines on the surface of high and low density lipoproteins (HDLs and LDLs). The cholesterol ester is then transported back to the liver. Also produced in the brain by primary astrocytes, and esterifies free cholesterol on nascent APOE-containing lipoproteins secreted from glia and influences cerebral spinal fluid (CSF) APOE- and APOA1 levels. Together with APOE and the cholesterol transporter ABCA1, plays a key role in the maturation of glial-derived, nascent lipoproteins. Required for remodeling high-density lipoprotein particles into their spherical forms. Has a preference for plasma 16:0-18:2 or 18:O-18:2 phosphatidylcholines. Catalyzes the hydrolysis of 1-O-alkyl-2-acetyl-sn-glycero-3-phosphocholine (platelet-activating factor or PAF) to 1-O-alkyl-sn-glycero-3-phosphocholine (lyso-PAF). Also catalyzes the transfer of the acetate group from PAF to 1-hexadecanoyl-sn-glycero-3-phosphocholine forming lyso-PAF. Catalyzes the esterification of (24S)-hydroxycholesterol (24(S)OH-C), also known as cerebrosterol to produce 24(S)OH-C monoesters. This chain is Phosphatidylcholine-sterol acyltransferase (LCAT), found in Sus scrofa (Pig).